A 248-amino-acid chain; its full sequence is MALLEICCYSMECALTAQQNGADRVELCAAPKEGGLTPSLGVLKSVRQRVTIPVHPIIRPRGGDFCYSDGEFAAILEDVRTVRELGFPGLVTGVLDVDGNVDMPRMEKIMAAAGPLAVTFHRAFDMCANPLYTLNNLAELGIARVLTSGQKSDALQGLSKIMELIAHRDAPIIMAGAGVRAENLHHFLDAGVLEVHSSAGAWQASPMRYRNQGLSMSSDEHADEYSRYIVDGAAVAEMKGIIERHQAK.

Belongs to the CutC family. Homodimer.

Its subcellular location is the cytoplasm. This is PF03932 family protein CutC from Escherichia coli O139:H28 (strain E24377A / ETEC).